Reading from the N-terminus, the 527-residue chain is Rhesus-like glycoprotein A (527 aa).

The Cytoplasmic portion of the chain corresponds to 1 to 18 (MTHNDDDHKWVTTKRKEP). The chain crosses the membrane as a helical span at residues 19-39 (IFFTVILFIFQIFMIICFAAL). The Extracellular segment spans residues 40–70 (TGYDTNKNYTGSENPDEFKGGEVQERVNNFY). Asparagine 47 carries N-linked (GlcNAc...) asparagine glycosylation. A helical transmembrane segment spans residues 71–91 (GYFRDINIMIFFGFGFLMTFL). Residues 92 to 99 (RRYGYSAL) lie on the Cytoplasmic side of the membrane. Residues 100–120 (GYTFIISALVSQWSVLLNGFF) form a helical membrane-spanning segment. Over 121–141 (EAWSHSNKHGEFPSTWEFSMD) the chain is Extracellular. A helical transmembrane segment spans residues 142 to 162 (SLLQGFFCSGSVMISYGAILG). Topologically, residues 163–166 (RVTP) are cytoplasmic. Residues 167–187 (LHMLIMGIIEPIFFFLNVFIG) traverse the membrane as a helical segment. Over 188 to 195 (EMNLEAID) the chain is Extracellular. Residues 196–216 (VGGGMYIHLFGSVFGLTVAWF) traverse the membrane as a helical segment. The Cytoplasmic segment spans residues 217-236 (LTDRKSKECTDNAPSYSGDN). Residues 237–257 (FAMAGTLFLWMMWPSFNAAIA) form a helical membrane-spanning segment. Residues 258–263 (PLGEPQ) lie on the Extracellular side of the membrane. A helical transmembrane segment spans residues 264–284 (FRAIANTFLSLTGSTVATFIV). The Cytoplasmic segment spans residues 285–299 (SRLFSHLGNKLDMVH). A helical membrane pass occupies residues 300 to 319 (VQNSSLAGGVVQGCIAHMNI). Residues 320–321 (NP) are Extracellular-facing. A helical transmembrane segment spans residues 322–342 (GGAIAMGFIAGTISVCGYLFI). Over 343 to 357 (TPKVQRKLHIQDTCG) the chain is Cytoplasmic. A helical membrane pass occupies residues 358 to 378 (ILNLHCIPGFLGSIAAIFAAI). Over 379 to 406 (KGLNNPNMYSKVEFEQIFRAGDSQASAN) the chain is Extracellular. A helical membrane pass occupies residues 407–427 (LIATMVSIGLGIVGGLLVGVI). Residues 428 to 527 (LLQLKKIKGL…EEDEFKQEPI (100 aa)) lie on the Cytoplasmic side of the membrane. The interval 471 to 527 (SEDTAGGDDEEEGVGKEHGAVEMGKHNRIVQPKQDNKYHKQLPSDDEEEDEFKQEPI) is disordered. Basic and acidic residues predominate over residues 483–495 (GVGKEHGAVEMGK). Acidic residues predominate over residues 514–527 (SDDEEEDEFKQEPI).

It belongs to the ammonium transporter (TC 2.A.49) family. Rh subfamily. In terms of assembly, interacts with ap1g1.

It localises to the contractile vacuole. Its subcellular location is the membrane. May be a carbon dioxide/bicarbonate transporter. This Dictyostelium discoideum (Social amoeba) protein is Rhesus-like glycoprotein A (rhgA).